The following is a 647-amino-acid chain: Threonine--tRNA ligase (647 aa).

The TGS domain occupies 1-61 (MIKITFPDGA…EEDGSIEIVT (61 aa)). The segment at 240 to 538 (DHRKLGKELD…LIETYKGAFP (299 aa)) is catalytic. Residues cysteine 334, histidine 385, and histidine 515 each coordinate Zn(2+).

It belongs to the class-II aminoacyl-tRNA synthetase family. Homodimer. Zn(2+) serves as cofactor.

The protein resides in the cytoplasm. It catalyses the reaction tRNA(Thr) + L-threonine + ATP = L-threonyl-tRNA(Thr) + AMP + diphosphate + H(+). Functionally, catalyzes the attachment of threonine to tRNA(Thr) in a two-step reaction: L-threonine is first activated by ATP to form Thr-AMP and then transferred to the acceptor end of tRNA(Thr). Also edits incorrectly charged L-seryl-tRNA(Thr). This Streptococcus pyogenes serotype M18 (strain MGAS8232) protein is Threonine--tRNA ligase.